The primary structure comprises 355 residues: UDP-3-O-acylglucosamine N-acyltransferase (355 aa).

His248 functions as the Proton acceptor in the catalytic mechanism.

The protein belongs to the transferase hexapeptide repeat family. LpxD subfamily. Homotrimer.

It catalyses the reaction a UDP-3-O-[(3R)-3-hydroxyacyl]-alpha-D-glucosamine + a (3R)-hydroxyacyl-[ACP] = a UDP-2-N,3-O-bis[(3R)-3-hydroxyacyl]-alpha-D-glucosamine + holo-[ACP] + H(+). It participates in bacterial outer membrane biogenesis; LPS lipid A biosynthesis. Functionally, catalyzes the N-acylation of UDP-3-O-acylglucosamine using 3-hydroxyacyl-ACP as the acyl donor. Is involved in the biosynthesis of lipid A, a phosphorylated glycolipid that anchors the lipopolysaccharide to the outer membrane of the cell. The polypeptide is UDP-3-O-acylglucosamine N-acyltransferase (Synechococcus elongatus (strain ATCC 33912 / PCC 7942 / FACHB-805) (Anacystis nidulans R2)).